The sequence spans 594 residues: A-type ATP synthase subunit A (594 aa).

236–243 contacts ATP; sequence GPFGSGKT.

It belongs to the ATPase alpha/beta chains family. In terms of assembly, has multiple subunits with at least A(3), B(3), C, D, E, F, H, I and proteolipid K(x).

The protein localises to the cell membrane. The catalysed reaction is ATP + H2O + 4 H(+)(in) = ADP + phosphate + 5 H(+)(out). Its function is as follows. Component of the A-type ATP synthase that produces ATP from ADP in the presence of a proton gradient across the membrane. The A chain is the catalytic subunit. The protein is A-type ATP synthase subunit A of Pyrobaculum calidifontis (strain DSM 21063 / JCM 11548 / VA1).